Reading from the N-terminus, the 448-residue chain is MSQSTATYINVIGAGLAGSEAAYQIAKRGIPVKLYEMRGVKATPQHKTTNFAELVCSNSFRGDSLTNAVGLLKEEMRRLDSIIMRNGEANRVPAGGAMAVDREGYAESVTAELENHPLIEVIRGEITEIPDDAITVIATGPLTSDALAEKIHALNGGDGFYFYDAAAPIIDKSTIDMSKVYLKSRYDKGEAAYLNCPMTKEEFMAFHEALTTAEEAPLNAFEKEKYFEGCMPIEVMAKRGIKTMLYGPMKPVGLEYPDDYTGPRDGEFKTPYAVVQLRQDNAAGSLYNIVGFQTHLKWGEQKRVFQMIPGLENAEFVRYGVMHRNSYMDSPNLLTETFQSRSNPNLFFAGQMTGVEGYVESAASGLVAGINAARLFKREEALIFPQTTAIGSLPHYVTHADSKHFQPMNVNFGIIKELEGPRIRDKKERYEAIASRALADLDTCLASL.

13-18 is a binding site for FAD; the sequence is GAGLAG.

Belongs to the MnmG family. TrmFO subfamily. FAD is required as a cofactor.

The protein resides in the cytoplasm. It catalyses the reaction uridine(54) in tRNA + (6R)-5,10-methylene-5,6,7,8-tetrahydrofolate + NADH + H(+) = 5-methyluridine(54) in tRNA + (6S)-5,6,7,8-tetrahydrofolate + NAD(+). The enzyme catalyses uridine(54) in tRNA + (6R)-5,10-methylene-5,6,7,8-tetrahydrofolate + NADPH + H(+) = 5-methyluridine(54) in tRNA + (6S)-5,6,7,8-tetrahydrofolate + NADP(+). In terms of biological role, catalyzes the folate-dependent formation of 5-methyl-uridine at position 54 (M-5-U54) in all tRNAs. In Streptococcus pyogenes serotype M1, this protein is Methylenetetrahydrofolate--tRNA-(uracil-5-)-methyltransferase TrmFO.